Reading from the N-terminus, the 130-residue chain is Protein LLP homolog (130 aa).

Over residues 1-21 the composition is skewed to basic residues; that stretch reads MAKSLRSKWKRKMRAEKRKKN. Disordered stretches follow at residues 1–23 and 57–76; these read MAKSLRSKWKRKMRAEKRKKNAP and QEKMQCEEGRCDGADEEKDD. The stretch at 10–78 forms a coiled coil; that stretch reads KRKMRAEKRK…GADEEKDDMK (69 aa). Lys-78 is covalently cross-linked (Glycyl lysine isopeptide (Lys-Gly) (interchain with G-Cter in SUMO2)). Basic residues predominate over residues 104–124; the sequence is RQRKRLKAKREKKRGKSRAKA. A disordered region spans residues 104 to 130; sequence RQRKRLKAKREKKRGKSRAKAAKGLAW.

The protein belongs to the learning-associated protein family. Interacts with CTCF, MYO1C and with the transcriptional machinery, including RNA polymerase II and TBP. In terms of tissue distribution, widely expressed, with high levels in testis and spleen and low levels in heart. In the brain, expressed in the cortex and hippocampus, and at very low levels in the cerebellum.

It is found in the nucleus. It localises to the nucleolus. The protein localises to the chromosome. In hippocampal neurons, regulates dendritic and spine growth and synaptic transmission. In Mus musculus (Mouse), this protein is Protein LLP homolog (Llph).